A 167-amino-acid chain; its full sequence is Regulatory protein RecX (167 aa).

Positions 19-49 (ESELRRKLASQPFSAKGHWGKQTGRSDNEPV) are disordered.

This sequence belongs to the RecX family.

It is found in the cytoplasm. Its function is as follows. Modulates RecA activity. The chain is Regulatory protein RecX from Yersinia enterocolitica serotype O:8 / biotype 1B (strain NCTC 13174 / 8081).